A 220-amino-acid polypeptide reads, in one-letter code: Peptidyl-tRNA hydrolase (220 aa).

Tyr-14 is a tRNA binding site. Catalysis depends on His-19, which acts as the Proton acceptor. Phe-66, Asn-68, and Asn-114 together coordinate tRNA. Residues 184–220 are disordered; sequence QAFNSTDLRPRPEPVPAPQPADVSGPQETGPAERPEV.

The protein belongs to the PTH family. As to quaternary structure, monomer.

The protein localises to the cytoplasm. It catalyses the reaction an N-acyl-L-alpha-aminoacyl-tRNA + H2O = an N-acyl-L-amino acid + a tRNA + H(+). Its function is as follows. Hydrolyzes ribosome-free peptidyl-tRNAs (with 1 or more amino acids incorporated), which drop off the ribosome during protein synthesis, or as a result of ribosome stalling. Catalyzes the release of premature peptidyl moieties from peptidyl-tRNA molecules trapped in stalled 50S ribosomal subunits, and thus maintains levels of free tRNAs and 50S ribosomes. This Deinococcus deserti (strain DSM 17065 / CIP 109153 / LMG 22923 / VCD115) protein is Peptidyl-tRNA hydrolase.